The primary structure comprises 169 residues: Cell division inhibitor SulA (169 aa).

The segment at 106 to 112 (ALRTGNY) is ftsZ binding. Positions 162–169 (KIHSNLYH) are lon protease binding.

It belongs to the SulA family. As to quaternary structure, interacts with FtsZ. In terms of processing, is rapidly cleaved and degraded by the Lon protease once DNA damage is repaired.

Component of the SOS system and an inhibitor of cell division. Accumulation of SulA causes rapid cessation of cell division and the appearance of long, non-septate filaments. In the presence of GTP, binds a polymerization-competent form of FtsZ in a 1:1 ratio, thus inhibiting FtsZ polymerization and therefore preventing it from participating in the assembly of the Z ring. This mechanism prevents the premature segregation of damaged DNA to daughter cells during cell division. This is Cell division inhibitor SulA from Salmonella gallinarum (strain 287/91 / NCTC 13346).